Reading from the N-terminus, the 193-residue chain is Thymidylate kinase (193 aa).

7–14 lines the ATP pocket; sequence GIDGCGKS.

The protein belongs to the thymidylate kinase family.

It carries out the reaction dTMP + ATP = dTDP + ADP. Phosphorylation of dTMP to form dTDP in both de novo and salvage pathways of dTTP synthesis. The polypeptide is Thymidylate kinase (Coprothermobacter proteolyticus (strain ATCC 35245 / DSM 5265 / OCM 4 / BT)).